Here is a 1143-residue protein sequence, read N- to C-terminus: MFERTLVDLIRGIRNHKKNETKFINQCINEIKEELKGDMQKKTVAVQKLTYIQMLGFDISWASFKIVEVMSCNKFSSKRIGYLAASQSFNEGTDVIVLATHQIRKDFLSSNQSEAYLALNCLSNICTTDLARELANDILTLLSTQKTHILKRAITVLYKIFLRYPESLRPAFPKLREKLDDPEPSVVSCSVNVICELARRNPKNYLPLAPVLFRILTNTTNNYWMLIKIVKLFAALTPHEPRLGKKLIDPLTNIINSSPSVSLLYECIQTCITGMSDHIPLMKLCISKLRTLIEHNDQNLKYLGLLALNNIMKIHPKAVSEHRDLVLNCLEDDDISIRLRALDLLPGMTSKKNIGDIVFKLLDHLDNAEGQYKEQIIEKIIELCSMGTYQFITDFEWYINILVKLSQIQDSIHGKLIASQLLDVVIRVKIVRAYSTRQMIELLKNPKLMSNPTEGGMCEVLYAAAWIVGEFSGYVNRPIDALEAFLQPRVCVLPSHIQSVYMLNSLKVFSHACAKANGDKIPSLDDDDEEEEAQEEEDQNEITHEIVQECLEIIKSRLTIFTHSIYLNVQERACLINELLSFYTVTKEQGNNISKELISLFTEQLNPVGPKAQKKVPIPEGLDLDEWINDPKHQEPIEEDEDDDIFNTSTSSHQKKHHKHHRGGYDGDDDEDDETNSSHSGHSSSNFNRHPIDIQRQKEERLRKQANNPYMLGGKVSKKLSTNDPENIPVVQLTGDLGHLHVGASSNRPMPSKGSKKTKKHYTIDTTTEMPEGAKESDDEDEKDNKYKNDALSNINLSEPLTASDVLHTSRHRTDIIKEKEREMAMLAKKNAKLSPKSPPSTANYSEVTSPEIAPAKKATKKAAAGSNPPPPPTAKKSSKKPAATSSTTTTTKSTQAAAAVVAPPPVIVKKVLKTILDDDNFKITCEILKVSPSNETDNNQIKLTMKVQNKTDEDMSDVSISLKNPAEQCVSIKNSGEIGVLEADASTTHTELLNVVNVLNSQELQFTLLASPSSSPSITNQLSIDLPFSFFIVATKLPKDKFAEILQKSGQVSAMDSTKITGQSLTMPLVIEKLAQQLSIEVVQAHPNGQTASFYAKTTQNHHIAMLVKEKDGNISFDIKSPQSLLNQILVKEIAQLTFSSK.

8 HEAT repeats span residues Asp129–Glu166, Ser167–Lys203, Tyr205–Arg242, Lys245–Ile279, Pro280–Lys317, Ala318–Ile354, Asp356–Tyr389, and Leu416–Gly455. 5 disordered regions span residues Lys520–Glu541, Gln634–Ile692, Lys704–Ile728, His741–Leu792, and Lys829–Ala899. Residues Leu524–Asn540 are compositionally biased toward acidic residues. A coiled-coil region spans residues Asp526–Cys550. Positions His653 to Arg662 are enriched in basic residues. Over residues Asp666 to Thr675 the composition is skewed to acidic residues. Residues Thr814–Ser835 are a coiled coil. Residues Pro840 to Thr849 show a composition bias toward polar residues. Low complexity-rich tracts occupy residues Ala854–Ser867 and Lys881–Ala899. The GAE domain occupies Lys914–Ser1016.

It belongs to the adaptor complexes large subunit family. In terms of assembly, adaptor protein complex 3 (AP-3) is a heterotetramer composed of two large adaptins (delta-type subunit and beta-type subunit), a medium adaptin (mu-type subunit) and a small adaptin (sigma-type subunit).

It is found in the endosome membrane. Part of the AP-3 complex, an adaptor-related complex which is essential for the compartmentalization of the endocytic pathway. This chain is AP-3 complex subunit delta (ap3d1), found in Dictyostelium discoideum (Social amoeba).